The chain runs to 588 residues: Adenylate kinase 5, chloroplastic (588 aa).

The tract at residues 1-34 (MASLSLSSAHFSSTSSSSRSSISTSSLSPSSTSL) is disordered. The transit peptide at 1–73 (MASLSLSSAH…SFSTSNSQIR (73 aa)) directs the protein to the chloroplast. 89–94 (ASGKGT) is an ATP binding site. An NMP region spans residues 109-138 (STGDLLRAEVSSGTDIGKRAKEFMNSGSLV). Residues R115, 136 to 138 (SLV), 165 to 168 (GFPR), and Q172 contribute to the AMP site. Residues 202–235 (GRRLDPVTGKIYHIKNYPPESDEIKARLVTRPDD) are LID. ATP is bound at residue R203. Residues R232 and R243 each coordinate AMP.

The protein belongs to the adenylate kinase family. As to quaternary structure, monomer.

Its subcellular location is the plastid. It localises to the chloroplast. It catalyses the reaction AMP + ATP = 2 ADP. Its function is as follows. Catalyzes the reversible transfer of the terminal phosphate group between ATP and AMP. The chain is Adenylate kinase 5, chloroplastic from Arabidopsis thaliana (Mouse-ear cress).